Consider the following 447-residue polypeptide: Growth/differentiation factor 7 (447 aa).

The first 19 residues, 1-19 (MDLSAAAALCLWLLSACRP), serve as a signal peptide directing secretion. The propeptide occupies 20 to 318 (RDGLEAAAVL…AVTAGRRRRR (299 aa)). Residue asparagine 80 is glycosylated (N-linked (GlcNAc...) asparagine). Residues 292–346 (LAAQPPPDPGTGTGSPRAVTAGRRRRRTALAGTRTAQGSGGGAGRGHGRRGRSRC) form a disordered region. A compositionally biased stretch (basic residues) spans 337–346 (GHGRRGRSRC). Cystine bridges form between cysteine 346–cysteine 412, cysteine 375–cysteine 444, and cysteine 379–cysteine 446.

It belongs to the TGF-beta family. Homodimer; disulfide-linked. As to expression, highly expressed in the primary aera of brain neocortex.

The protein localises to the secreted. In terms of biological role, may play an active role in the motor area of the primate neocortex. The chain is Growth/differentiation factor 7 (GDF7) from Chlorocebus aethiops (Green monkey).